A 577-amino-acid polypeptide reads, in one-letter code: Arginine--tRNA ligase (577 aa).

A 'HIGH' region motif is present at residues 122 to 132 (PNVAKEMHVGH).

This sequence belongs to the class-I aminoacyl-tRNA synthetase family. In terms of assembly, monomer.

It is found in the cytoplasm. It carries out the reaction tRNA(Arg) + L-arginine + ATP = L-arginyl-tRNA(Arg) + AMP + diphosphate. The chain is Arginine--tRNA ligase from Salmonella newport (strain SL254).